The primary structure comprises 734 residues: Photosystem I P700 chlorophyll a apoprotein A2 (734 aa).

Transmembrane regions (helical) follow at residues 46 to 69, 135 to 158, 175 to 199, 273 to 291, 330 to 353, 369 to 395, 417 to 439, and 517 to 535; these read IFAS…FHVA, LYTG…LHLQ, LNHH…HVAI, MAHH…GHMY, IHFQ…QHMY, AALY…IFFI, AIIS…LYVH, and FLVH…LILV. [4Fe-4S] cluster-binding residues include Cys559 and Cys568. A run of 2 helical transmembrane segments spans residues 575 to 596 and 643 to 665; these read AFYL…YWHW and LSVW…MFLI. Residues His654, Met662, and Tyr670 each contribute to the chlorophyll a site. Phylloquinone is bound at residue Trp671. A helical transmembrane segment spans residues 707–727; it reads LVGLAHFSVGYIFTYAAFLIA.

This sequence belongs to the PsaA/PsaB family. As to quaternary structure, the PsaA/B heterodimer binds the P700 chlorophyll special pair and subsequent electron acceptors. PSI consists of a core antenna complex that captures photons, and an electron transfer chain that converts photonic excitation into a charge separation. The eukaryotic PSI reaction center is composed of at least 11 subunits. P700 is a chlorophyll a/chlorophyll a' dimer, A0 is one or more chlorophyll a, A1 is one or both phylloquinones and FX is a shared 4Fe-4S iron-sulfur center. is required as a cofactor.

The protein resides in the plastid. It localises to the chloroplast thylakoid membrane. It catalyses the reaction reduced [plastocyanin] + hnu + oxidized [2Fe-2S]-[ferredoxin] = oxidized [plastocyanin] + reduced [2Fe-2S]-[ferredoxin]. Its function is as follows. PsaA and PsaB bind P700, the primary electron donor of photosystem I (PSI), as well as the electron acceptors A0, A1 and FX. PSI is a plastocyanin-ferredoxin oxidoreductase, converting photonic excitation into a charge separation, which transfers an electron from the donor P700 chlorophyll pair to the spectroscopically characterized acceptors A0, A1, FX, FA and FB in turn. Oxidized P700 is reduced on the lumenal side of the thylakoid membrane by plastocyanin. This Helianthus annuus (Common sunflower) protein is Photosystem I P700 chlorophyll a apoprotein A2.